Reading from the N-terminus, the 310-residue chain is Dicarboxylate carrier UCP2 (310 aa).

Topologically, residues Met1–Pro10 are mitochondrial intermembrane. Residues Pro11–Phe32 form a helical membrane-spanning segment. Solcar repeat units lie at residues Pro11–Phe107, Ala115–Ala204, and Asp213–Ala298. The Mitochondrial matrix portion of the chain corresponds to Pro33–Ser78. Residues Leu79 to Tyr101 traverse the membrane as a helical segment. The Mitochondrial intermembrane portion of the chain corresponds to Asp102–Arg120. A helical membrane pass occupies residues Leu121–Pro137. Topologically, residues Thr138–Gly181 are mitochondrial matrix. Residues Pro182–Tyr198 traverse the membrane as a helical segment. Residues Asp199–Leu215 are Mitochondrial intermembrane-facing. The helical transmembrane segment at Pro216–Pro235 threads the bilayer. At Val236–Ala269 the chain is on the mitochondrial matrix side. A helical membrane pass occupies residues Phe270–Tyr292. Positions Ser277–Met299 are purine nucleotide binding. At Glu293–Leu310 the chain is on the mitochondrial intermembrane side.

This sequence belongs to the mitochondrial carrier (TC 2.A.29) family. As to quaternary structure, homotetramer. Adopts an asymmetrical dimer of dimers functional form.

Its subcellular location is the mitochondrion inner membrane. The catalysed reaction is L-aspartate(out) + phosphate(in) + H(+)(in) = L-aspartate(in) + phosphate(out) + H(+)(out). The enzyme catalyses oxaloacetate(out) + phosphate(in) + H(+)(in) = oxaloacetate(in) + phosphate(out) + H(+)(out). It catalyses the reaction (S)-malate(out) + phosphate(in) + H(+)(in) = (S)-malate(in) + phosphate(out) + H(+)(out). It carries out the reaction malonate(out) + phosphate(in) + H(+)(in) = malonate(in) + phosphate(out) + H(+)(out). The catalysed reaction is sulfate(out) + phosphate(in) + H(+)(in) = sulfate(in) + phosphate(out) + H(+)(out). The enzyme catalyses (S)-malate(out) = (S)-malate(in). It catalyses the reaction L-aspartate(out) = L-aspartate(in). It carries out the reaction phosphate(in) = phosphate(out). The catalysed reaction is chloride(in) = chloride(out). The enzyme catalyses H(+)(in) = H(+)(out). It catalyses the reaction a long-chain fatty acid(out) = a long-chain fatty acid(in). UCP are mitochondrial transporter proteins that create proton leaks across the inner mitochondrial membrane, thus uncoupling oxidative phosphorylation from ATP synthesis. As a result, energy is dissipated in the form of heat. Functionally, antiporter that exports dicarboxylate intermediates of the Krebs cycle in exchange for phosphate plus a proton across the inner membrane of mitochondria, a process driven by mitochondrial motive force with an overall impact on glycolysis, glutaminolysis and glutathione-dependent redox balance. Continuous export of oxaloacetate and related four-carbon dicarboxylates from mitochondrial matrix into the cytosol negatively regulates the oxidation of acetyl-CoA substrates via the Krebs cycle, lowering the ATP/ADP ratio and reactive oxygen species (ROS) production. May mediate inducible proton entry into the mitochondrial matrix affecting ATP turnover as a protection mechanism against oxidative stress. The proton currents are most likely associated with fatty acid flipping across the inner membrane of mitochondria in a metabolic process regulated by free fatty acids and purine nucleotides. The polypeptide is Dicarboxylate carrier UCP2 (ucp2) (Danio rerio (Zebrafish)).